The following is a 216-amino-acid chain: Triosephosphate isomerase (216 aa).

Residue 7–9 coordinates substrate; sequence NLK. The Electrophile role is filled by histidine 89. Catalysis depends on glutamate 137, which acts as the Proton acceptor. Residues isoleucine 142, glycine 175, and 196–197 each bind substrate; that span reads AS.

Belongs to the triosephosphate isomerase family. Homotetramer; dimer of dimers.

The protein localises to the cytoplasm. The enzyme catalyses D-glyceraldehyde 3-phosphate = dihydroxyacetone phosphate. It participates in carbohydrate biosynthesis; gluconeogenesis. The protein operates within carbohydrate degradation; glycolysis; D-glyceraldehyde 3-phosphate from glycerone phosphate: step 1/1. In terms of biological role, involved in the gluconeogenesis. Catalyzes stereospecifically the conversion of dihydroxyacetone phosphate (DHAP) to D-glyceraldehyde-3-phosphate (G3P). The chain is Triosephosphate isomerase from Thermoplasma acidophilum (strain ATCC 25905 / DSM 1728 / JCM 9062 / NBRC 15155 / AMRC-C165).